Consider the following 224-residue polypeptide: Small ribosomal subunit protein uS3 (224 aa).

Residues 39 to 107 (IREFLKKKPS…DVWVEIAEVK (69 aa)) form the KH type-2 domain.

This sequence belongs to the universal ribosomal protein uS3 family. In terms of assembly, part of the 30S ribosomal subunit. Forms a tight complex with proteins S10 and S14.

Functionally, binds the lower part of the 30S subunit head. Binds mRNA in the 70S ribosome, positioning it for translation. In Chlamydia muridarum (strain MoPn / Nigg), this protein is Small ribosomal subunit protein uS3.